Reading from the N-terminus, the 89-residue chain is Large ribosomal subunit protein bL27 (89 aa).

The disordered stretch occupies residues 1–23 (MAHKKAGGSSRNGRDSESKRLGV).

It belongs to the bacterial ribosomal protein bL27 family.

The polypeptide is Large ribosomal subunit protein bL27 (Rhizobium meliloti (strain 1021) (Ensifer meliloti)).